The following is a 443-amino-acid chain: MAKQPGLDFQSAKGGLGELKRRLLFVIGALIVFRIGSFIPIPGIDAAVLAKLLEQQRGTIIEMFNMFSGGALSRASIFALGIMPYISASIIIQLLTVVHPTLAEIKKEGESGRRKISQYTRYGTLVLAIFQSIGIATGLPNMPGMQGLVINPGFAFYFTAVVSLVTGTMFLMWLGEQITERGIGNGISIIIFAGIVAGLPPAIAHTIEQARQGDLHFLVLLLVAVLVFAVTFFVVFVERGQRRIVVNYAKRQQGRRVYAAQSTHLPLKVNMAGVIPAIFASSIILFPATIASWFGGGTGWNWLTTISLYLQPGQPLYVLLYASAIIFFCFFYTALVFNPRETADNLKKSGAFVPGIRPGEQTAKYIDKVMTRLTLVGALYITFICLIPEFMRDAMKVPFYFGGTSLLIVVVVIMDFMAQVQTLMMSSQYESALKKANLKGYGR.

A run of 10 helical transmembrane segments spans residues 24–44 (LFVI…IPGI), 77–97 (IFAL…LLTV), 125–145 (LVLA…MPGM), 154–174 (FAFY…LMWL), 183–203 (IGNG…PPAI), 217–237 (FLVL…VVFV), 274–294 (VIPA…ASWF), 317–337 (YVLL…ALVF), 370–390 (MTRL…IPEF), and 397–417 (VPFY…MDFM).

It belongs to the SecY/SEC61-alpha family. Component of the Sec protein translocase complex. Heterotrimer consisting of SecY, SecE and SecG subunits. The heterotrimers can form oligomers, although 1 heterotrimer is thought to be able to translocate proteins. Interacts with the ribosome. Interacts with SecDF, and other proteins may be involved. Interacts with SecA.

The protein localises to the cell inner membrane. The central subunit of the protein translocation channel SecYEG. Consists of two halves formed by TMs 1-5 and 6-10. These two domains form a lateral gate at the front which open onto the bilayer between TMs 2 and 7, and are clamped together by SecE at the back. The channel is closed by both a pore ring composed of hydrophobic SecY resides and a short helix (helix 2A) on the extracellular side of the membrane which forms a plug. The plug probably moves laterally to allow the channel to open. The ring and the pore may move independently. This Escherichia coli O157:H7 protein is Protein translocase subunit SecY.